The sequence spans 251 residues: 14-3-3-like protein (251 aa).

Belongs to the 14-3-3 family. As to expression, most abundant in roots and flowers.

This chain is 14-3-3-like protein, found in Nicotiana tabacum (Common tobacco).